Here is a 362-residue protein sequence, read N- to C-terminus: Major capsid protein VP1 (362 aa).

A Bipartite nuclear localization signal motif is present at residues 5–19 (KRKGECPGAAPKKPK). Position 338 is a phosphothreonine; by host (T338).

Belongs to the polyomaviruses coat protein VP1 family. In terms of assembly, homomultimer; disulfide-linked. The virus capsid is composed of 72 icosahedral units, each one composed of five disulfide-linked copies of VP1. Interacts with minor capsid proteins VP2 and VP3.

It is found in the virion. The protein resides in the host nucleus. In terms of biological role, forms an icosahedral capsid with a T=7 symmetry and a 40 nm diameter. The capsid is composed of 72 pentamers linked to each other by disulfide bonds and associated with VP2 or VP3 proteins. Interacts with sialic acids on the cell surface to provide virion attachment to target cell. Once attached, the virion is internalized by endocytosis and traffics to the endoplasmic reticulum. Inside the endoplasmic reticulum, the protein folding machinery isomerizes VP1 interpentamer disulfide bonds, thereby triggering initial uncoating. Next, the virion uses the endoplasmic reticulum-associated degradation machinery to probably translocate in the cytosol before reaching the nucleus. Nuclear entry of the viral DNA involves the selective exposure and importin recognition of VP2/Vp3 nuclear localization signal. In late phase of infection, neo-synthesized VP1 encapsulates replicated genomic DNA in the nucleus, and participates in rearranging nucleosomes around the viral DNA. The sequence is that of Major capsid protein VP1 from Simian virus 12 (strain wt100) (SV-12).